The sequence spans 401 residues: Inositol phosphorylceramide synthase catalytic subunit AUR1 (401 aa).

Residues 1-41 are Cytoplasmic-facing; it reads MANPFSRWFLSERPPNCHVADLETSLDPHQTLLKVQKYKPA. The chain crosses the membrane as a helical span at residues 42 to 62; sequence LSDWVHYIFLGSIMLFVFITN. The Lumenal segment spans residues 63 to 64; it reads PA. A helical transmembrane segment spans residues 65–85; that stretch reads PWIFKILFYCFLGTLFIIPAT. Topologically, residues 86–87 are cytoplasmic; sequence SQ. A helical membrane pass occupies residues 88–108; that stretch reads FFFNALPILTWVALYFTSSYF. Residues 109–155 are Lumenal-facing; the sequence is PDDRRPPITVKVLPAVETILYGDNLSDILATSTNSFLDILAWLPYGL. N132 is a glycosylation site (N-linked (GlcNAc...) asparagine). A helical transmembrane segment spans residues 156–176; the sequence is FHFGAPFVVAAILFVFGPPTV. At 177–178 the chain is on the cytoplasmic side; sequence LQ. The helical transmembrane segment at 179–199 threads the bilayer; it reads GYAFAFGYMNLFGVIMQNVFP. Residues 200 to 245 are Lumenal-facing; the sequence is AAPPWYKILYGLQSANYDMHGSPGGLARIDKLLGINMYTTAFSNSS. Residues 246 to 266 traverse the membrane as a helical segment; the sequence is VIFGAFPSLHSGCATMEALFF. At 267–268 the chain is on the cytoplasmic side; sequence CY. The chain crosses the membrane as a helical span at residues 269-289; sequence CFPKLKPLFIAYVCWLWWSTM. Residues 290-291 are Lumenal-facing; it reads YL. Residues 292 to 312 form a helical membrane-spanning segment; the sequence is THHYFVDLMAGSVLSYVIFQY. Residues 313–401 lie on the Cytoplasmic side of the membrane; that stretch reads TKYTHLPIVD…SITSLGVKRA (89 aa). Residues 374–401 form a disordered region; it reads VSPSLFDGSTSVSRSSATSITSLGVKRA. A compositionally biased stretch (low complexity) spans 382–395; it reads STSVSRSSATSITS. 2 positions are modified to phosphoserine: S392 and S395.

Belongs to the AUR1 family. As to quaternary structure, component of the inositol phosphorylceramide synthase complex composed of at least AUR1 and KEI1.

The protein resides in the golgi apparatus. The protein localises to the golgi stack membrane. It carries out the reaction an N-(2R-hydroxy-very-long-chain fatty acyl)-(R)-4-hydroxysphingoid base + a 1,2-diacyl-sn-glycero-3-phospho-(1D-myo-inositol) = a 1D-myo-inositol-1-phospho-N-[(R)-2-hydroxy-very-long-chain fatty acyl]-(R)-4-hydroxysphingoid base + a 1,2-diacyl-sn-glycerol. With respect to regulation, inhibited by aureobasidin A (AbA), khafrefungin and rustmicin. Its function is as follows. Catalytic component of the inositol phosphorylceramide synthase which catalyzes the addition of a phosphorylinositol group onto ceramide to form inositol phosphorylceramide, an essential step in sphingolipid biosynthesis. In Saccharomyces cerevisiae (strain ATCC 204508 / S288c) (Baker's yeast), this protein is Inositol phosphorylceramide synthase catalytic subunit AUR1.